A 230-amino-acid chain; its full sequence is Protein-L-isoaspartate O-methyltransferase 1 (230 aa).

Ser65 is a catalytic residue.

The protein belongs to the methyltransferase superfamily. L-isoaspartyl/D-aspartyl protein methyltransferase family. As to quaternary structure, monomer. Expressed in roots, rosette leaves, stems, cauline leaves, flowers and developing seeds.

Its subcellular location is the cytoplasm. It catalyses the reaction [protein]-L-isoaspartate + S-adenosyl-L-methionine = [protein]-L-isoaspartate alpha-methyl ester + S-adenosyl-L-homocysteine. In terms of biological role, catalyzes the methyl esterification of L-isoaspartyl residues in peptides and proteins that result from spontaneous decomposition of normal L-aspartyl and L-asparaginyl residues. It plays a role in the repair and/or degradation of damaged proteins. Contributes to seed longevity and germination vigor by limiting the abnormal accumulation of the L-isoaspartyl residues in seed proteins. In Arabidopsis thaliana (Mouse-ear cress), this protein is Protein-L-isoaspartate O-methyltransferase 1 (PIMT1).